Here is a 688-residue protein sequence, read N- to C-terminus: PTS system glucoside-specific EIICBA component (688 aa).

The PTS EIIC type-1 domain maps to 3–427; that stretch reads KKLFGQLQRI…FKLKTPGRED (425 aa). Helical transmembrane passes span 12-32, 81-101, 137-157, 182-202, 223-243, 284-304, 315-335, 340-360, 364-384, and 395-415; these read IGKA…LLAF, LGLA…YLIM, LVLG…MGAL, FVPI…SFAW, LTTF…LHHI, AFTT…AFAI, IVGG…ITEP, FLFV…TSFL, LLGV…ILYG, and LVIP…DFAI. The PTS EIIB type-1 domain maps to 438 to 519; sequence AKLPFDVLDA…AKIMSGEITK (82 aa). The active-site Phosphocysteine intermediate; for EIIB activity is Cys-460. Positions 560-664 constitute a PTS EIIA type-1 domain; sequence DQVFAGKMMG…SIVTPMIITN (105 aa). Residue His-612 is the Tele-phosphohistidine intermediate; for EIIA activity of the active site.

It localises to the cell membrane. Functionally, the phosphoenolpyruvate-dependent sugar phosphotransferase system (sugar PTS), a major carbohydrate active -transport system, catalyzes the phosphorylation of incoming sugar substrates concomitantly with their translocation across the cell membrane. This system is involved in alpha- and beta-glucoside transport. In Staphylococcus aureus (strain MRSA252), this protein is PTS system glucoside-specific EIICBA component (glcB).